Here is a 243-residue protein sequence, read N- to C-terminus: MKEYIRPFLNQKNISENSKIAYSYDLEQFIEEVHDRITETNLRIYQASIKDFKAAVQKRKLSAVNQFLYFLYQQQLIEEFHRLVLPKVSVSKEQENELLDLSAFWQESSVPRGRLMALLILEMGLLPSEILQVRVADVNLDFQVLKIEKAGQKRVIKIPESLTSELEDYLTGTYLFEKNGKSYSRQWGFRQLEAFLIEQGQASLSAQSLREQFILRQREKGIGLYDIAQDLGLKTMITLEKYR.

The 72-residue stretch at 1–72 folds into the Core-binding (CB) domain; that stretch reads MKEYIRPFLN…AVNQFLYFLY (72 aa). The 159-residue stretch at 85–243 folds into the Tyr recombinase domain; that stretch reads LPKVSVSKEQ…KTMITLEKYR (159 aa). Active-site residues include lysine 149 and arginine 210. The O-(3'-phospho-DNA)-tyrosine intermediate role is filled by tyrosine 242.

The protein belongs to the 'phage' integrase family. XerD-like subfamily.

The protein localises to the cytoplasm. Its function is as follows. Putative tyrosine recombinase. Not involved in the cutting and rejoining of the recombining DNA molecules on dif(SL) site. The sequence is that of Tyrosine recombinase XerD-like from Streptococcus sanguinis (strain SK36).